The primary structure comprises 175 residues: Large ribosomal subunit protein uL10 (175 aa).

The protein belongs to the universal ribosomal protein uL10 family. In terms of assembly, part of the ribosomal stalk of the 50S ribosomal subunit. The N-terminus interacts with L11 and the large rRNA to form the base of the stalk. The C-terminus forms an elongated spine to which L12 dimers bind in a sequential fashion forming a multimeric L10(L12)X complex.

Its function is as follows. Forms part of the ribosomal stalk, playing a central role in the interaction of the ribosome with GTP-bound translation factors. In Prochlorococcus marinus (strain MIT 9515), this protein is Large ribosomal subunit protein uL10.